The primary structure comprises 315 residues: tRNA pseudouridine synthase B (315 aa).

Residue histidine 42 coordinates substrate. Aspartate 47 (nucleophile) is an active-site residue. 3 residues coordinate substrate: tyrosine 75, tyrosine 178, and leucine 199.

The protein belongs to the pseudouridine synthase TruB family. Type 1 subfamily.

It catalyses the reaction uridine(55) in tRNA = pseudouridine(55) in tRNA. Functionally, responsible for synthesis of pseudouridine from uracil-55 in the psi GC loop of transfer RNAs. The chain is tRNA pseudouridine synthase B from Photorhabdus laumondii subsp. laumondii (strain DSM 15139 / CIP 105565 / TT01) (Photorhabdus luminescens subsp. laumondii).